We begin with the raw amino-acid sequence, 400 residues long: Acetate kinase (400 aa).

Residue asparagine 10 coordinates Mg(2+). Residue lysine 17 coordinates ATP. Arginine 91 is a substrate binding site. Aspartate 150 acts as the Proton donor/acceptor in catalysis. ATP is bound by residues 210 to 214, 285 to 287, and 333 to 337; these read HLGGG, DFR, and GIGEN. Residue glutamate 387 coordinates Mg(2+).

This sequence belongs to the acetokinase family. Homodimer. Mg(2+) serves as cofactor. It depends on Mn(2+) as a cofactor.

Its subcellular location is the cytoplasm. It catalyses the reaction acetate + ATP = acetyl phosphate + ADP. The protein operates within metabolic intermediate biosynthesis; acetyl-CoA biosynthesis; acetyl-CoA from acetate: step 1/2. In terms of biological role, catalyzes the formation of acetyl phosphate from acetate and ATP. Can also catalyze the reverse reaction. The polypeptide is Acetate kinase (Buchnera aphidicola subsp. Baizongia pistaciae (strain Bp)).